The sequence spans 398 residues: 1-deoxy-D-xylulose 5-phosphate reductoisomerase (398 aa).

NADPH contacts are provided by T28, G29, S30, I31, G54, N57, and N135. K136 provides a ligand contact to 1-deoxy-D-xylulose 5-phosphate. An NADPH-binding site is contributed by E137. Residue D159 coordinates Mn(2+). 1-deoxy-D-xylulose 5-phosphate is bound by residues S160, E161, S185, and H208. E161 contacts Mn(2+). G214 provides a ligand contact to NADPH. 4 residues coordinate 1-deoxy-D-xylulose 5-phosphate: S221, N226, K227, and E230. E230 provides a ligand contact to Mn(2+).

The protein belongs to the DXR family. Mg(2+) serves as cofactor. Requires Mn(2+) as cofactor.

The enzyme catalyses 2-C-methyl-D-erythritol 4-phosphate + NADP(+) = 1-deoxy-D-xylulose 5-phosphate + NADPH + H(+). The protein operates within isoprenoid biosynthesis; isopentenyl diphosphate biosynthesis via DXP pathway; isopentenyl diphosphate from 1-deoxy-D-xylulose 5-phosphate: step 1/6. Functionally, catalyzes the NADPH-dependent rearrangement and reduction of 1-deoxy-D-xylulose-5-phosphate (DXP) to 2-C-methyl-D-erythritol 4-phosphate (MEP). The sequence is that of 1-deoxy-D-xylulose 5-phosphate reductoisomerase from Rhodococcus jostii (strain RHA1).